Consider the following 254-residue polypeptide: Ubiquinone/menaquinone biosynthesis C-methyltransferase UbiE (254 aa).

S-adenosyl-L-methionine-binding positions include T77, D98, 126–127 (NA), and S143.

Belongs to the class I-like SAM-binding methyltransferase superfamily. MenG/UbiE family.

The enzyme catalyses a 2-demethylmenaquinol + S-adenosyl-L-methionine = a menaquinol + S-adenosyl-L-homocysteine + H(+). The catalysed reaction is a 2-methoxy-6-(all-trans-polyprenyl)benzene-1,4-diol + S-adenosyl-L-methionine = a 5-methoxy-2-methyl-3-(all-trans-polyprenyl)benzene-1,4-diol + S-adenosyl-L-homocysteine + H(+). The protein operates within quinol/quinone metabolism; menaquinone biosynthesis; menaquinol from 1,4-dihydroxy-2-naphthoate: step 2/2. It participates in cofactor biosynthesis; ubiquinone biosynthesis. Functionally, methyltransferase required for the conversion of demethylmenaquinol (DMKH2) to menaquinol (MKH2) and the conversion of 2-polyprenyl-6-methoxy-1,4-benzoquinol (DDMQH2) to 2-polyprenyl-3-methyl-6-methoxy-1,4-benzoquinol (DMQH2). This chain is Ubiquinone/menaquinone biosynthesis C-methyltransferase UbiE, found in Blochmanniella floridana.